The primary structure comprises 370 residues: Cobalt-precorrin-5B C(1)-methyltransferase (370 aa).

It belongs to the CbiD family.

It catalyses the reaction Co-precorrin-5B + S-adenosyl-L-methionine = Co-precorrin-6A + S-adenosyl-L-homocysteine. It functions in the pathway cofactor biosynthesis; adenosylcobalamin biosynthesis; cob(II)yrinate a,c-diamide from sirohydrochlorin (anaerobic route): step 6/10. Its function is as follows. Catalyzes the methylation of C-1 in cobalt-precorrin-5B to form cobalt-precorrin-6A. In Nostoc sp. (strain PCC 7120 / SAG 25.82 / UTEX 2576), this protein is Cobalt-precorrin-5B C(1)-methyltransferase.